We begin with the raw amino-acid sequence, 167 residues long: Large ribosomal subunit protein uL10 (167 aa).

This sequence belongs to the universal ribosomal protein uL10 family. Part of the ribosomal stalk of the 50S ribosomal subunit. The N-terminus interacts with L11 and the large rRNA to form the base of the stalk. The C-terminus forms an elongated spine to which L12 dimers bind in a sequential fashion forming a multimeric L10(L12)X complex.

Its function is as follows. Forms part of the ribosomal stalk, playing a central role in the interaction of the ribosome with GTP-bound translation factors. This Streptococcus mutans serotype c (strain ATCC 700610 / UA159) protein is Large ribosomal subunit protein uL10.